The following is a 165-amino-acid chain: Pyruvoyl-dependent arginine decarboxylase 1 (165 aa).

Pyruvic acid (Ser) is present on Ser45.

It belongs to the PdaD family. Pyruvate is required as a cofactor.

The enzyme catalyses L-arginine + H(+) = agmatine + CO2. This chain is Pyruvoyl-dependent arginine decarboxylase 1 (pdaD1), found in Methanosarcina mazei (strain ATCC BAA-159 / DSM 3647 / Goe1 / Go1 / JCM 11833 / OCM 88) (Methanosarcina frisia).